The primary structure comprises 81 residues: Small ribosomal subunit protein bS16 (81 aa).

This sequence belongs to the bacterial ribosomal protein bS16 family.

This chain is Small ribosomal subunit protein bS16, found in Alkaliphilus oremlandii (strain OhILAs) (Clostridium oremlandii (strain OhILAs)).